A 236-amino-acid chain; its full sequence is Small ribosomal subunit protein uS2c (236 aa).

The protein belongs to the universal ribosomal protein uS2 family.

The protein localises to the plastid. It localises to the chloroplast. The sequence is that of Small ribosomal subunit protein uS2c (rps2) from Triticum aestivum (Wheat).